The sequence spans 225 residues: O-methyltransferase rstn1 (225 aa).

Positions 97 and 142 each coordinate S-adenosyl-L-methionine.

This sequence belongs to the methyltransferase superfamily.

It carries out the reaction desmethylrestrictinol + S-adenosyl-L-methionine = restrictinol + S-adenosyl-L-homocysteine + H(+). Its pathway is antifungal biosynthesis. O-methyltransferase; part of the gene cluster that mediates the biosynthesis of the tetrahydropyranyl antifungal agent restricticin that acts as an inhibitor of CYP51 and blocks the ergosterol biosynthesis. Within the pathway, rstn1 uses S-adenosylmethionine to methylate position C4 of desmethylrestrictinol to produce restrictinol. The highly reducing polyketide synthase rstn3, the short chain dehydrogenase rstn4, the cyclase rstn5, the FAD-dependent monooxygenase rstn6 and the enoylreductase rstn7 are required to generate the first stable intermediate desmethylrestrictinol. Rstn3 with rstn7 biosynthesize the first polyketide chain intermediate that is reduced by rstn4, followed by epoxidation by rstn6 before 6-endo cyclization via epoxide opening by rstn5 leads to desmethylrestrictinol. The methyltransferase rstn1 then catalyzes the C4 O-methylation of desmethylrestrictinol to produce restrictinol, and the nonribosomal peptide synthetase rstn8 catalyzes the C3 esterification of restrictinol with glycine that leads to restricticin. In Aspergillus nomiae NRRL (strain ATCC 15546 / NRRL 13137 / CBS 260.88 / M93), this protein is O-methyltransferase rstn1.